The following is a 48-amino-acid chain: 2-deoxy-glucose resistant protein 1, mitochondrial (48 aa).

Residues 1-28 (MQVGFVSQTNCRSFPACIVFLFQMSQRQ) constitute a mitochondrion transit peptide.

It localises to the mitochondrion. This is 2-deoxy-glucose resistant protein 1, mitochondrial (DGR1) from Saccharomyces cerevisiae (strain ATCC 204508 / S288c) (Baker's yeast).